Here is a 232-residue protein sequence, read N- to C-terminus: Ribonuclease P protein component 3 (232 aa).

The protein belongs to the eukaryotic/archaeal RNase P protein component 3 family. Consists of a catalytic RNA component and at least 4-5 protein subunits.

It localises to the cytoplasm. It catalyses the reaction Endonucleolytic cleavage of RNA, removing 5'-extranucleotides from tRNA precursor.. In terms of biological role, part of ribonuclease P, a protein complex that generates mature tRNA molecules by cleaving their 5'-ends. This chain is Ribonuclease P protein component 3, found in Methanococcus maripaludis (strain C7 / ATCC BAA-1331).